Consider the following 171-residue polypeptide: NRR repressor homolog 2 (171 aa).

Residues Met1–Lys12 are compositionally biased toward basic and acidic residues. 3 disordered regions span residues Met1–Met45, Ala65–Arg94, and Thr119–Lys143. Acidic residues predominate over residues Pro26–Gln43.

Belongs to the NPR1-interactor family. In terms of assembly, interacts with NPR1/NH1. Interacts with NPR3/NH3.

It localises to the nucleus. Binds to and weakly represses NPR1/NH1-mediated transcriptional activation of LG2 in vitro. The protein is NRR repressor homolog 2 of Oryza sativa subsp. japonica (Rice).